The sequence spans 453 residues: Phosphoglucosamine mutase (453 aa).

Ser102 functions as the Phosphoserine intermediate in the catalytic mechanism. Ser102, Asp243, Asp245, and Asp247 together coordinate Mg(2+). A Phosphoserine modification is found at Ser102.

This sequence belongs to the phosphohexose mutase family. It depends on Mg(2+) as a cofactor. Activated by phosphorylation.

The enzyme catalyses alpha-D-glucosamine 1-phosphate = D-glucosamine 6-phosphate. In terms of biological role, catalyzes the conversion of glucosamine-6-phosphate to glucosamine-1-phosphate. The chain is Phosphoglucosamine mutase from Bartonella tribocorum (strain CIP 105476 / IBS 506).